The primary structure comprises 35 residues: Putative gene 58 protein (35 aa).

This is Putative gene 58 protein (58) from Bacillus phage SP01 (Bacteriophage SP01).